The primary structure comprises 509 residues: Zinc finger CCCH-type with G patch domain-containing protein (509 aa).

The C3H1-type zinc finger occupies 155–178 (PCNYYLEGECRFDEIRCRYSHGAL). The interval 254 to 277 (EDELTSEDSSSSPHDESSDEIDSD) is disordered. The G-patch domain maps to 310 to 356 (TRGIGSKLMEKMGYIHGTGLGSEGRGIVTPVSAQILPQGRSLDACME). Residues 407-430 (LGGGESRHQGDQAAKKAKTNDLQQ) are disordered. A compositionally biased stretch (basic and acidic residues) spans 411-420 (ESRHQGDQAA).

It localises to the nucleus. Transcription repressor. The chain is Zinc finger CCCH-type with G patch domain-containing protein from Drosophila pseudoobscura pseudoobscura (Fruit fly).